The following is a 1135-amino-acid chain: Receptor-type guanylate cyclase gcy-4 (1135 aa).

Positions 1–20 (MTQLLRFLLILSIFCDFSHS) are cleaved as a signal peptide. Residues 21–483 (QRPTIRVGIA…CPIPFFDQYR (463 aa)) are Extracellular-facing. Residues Asn37, Asn193, Asn209, Asn251, Asn349, Asn375, Asn431, Asn436, and Asn447 are each glycosylated (N-linked (GlcNAc...) asparagine). A helical transmembrane segment spans residues 484–504 (LLIFVFVIVAGLLILAIFTCL). Residues 505-1135 (TSMVRNQRAE…VMRREMMRVS (631 aa)) lie on the Cytoplasmic side of the membrane. Residues 535–560 (KGRRLSTDSENSTVTKSSKGSSSKNF) are disordered. The Protein kinase domain occupies 545 to 837 (NSTVTKSSKG…KDNLMDHVFS (293 aa)). Residues 546–560 (STVTKSSKGSSSKNF) are compositionally biased toward low complexity. The region spanning 895 to 1025 (TVFFSDLVKF…DTVNTASRME (131 aa)) is the Guanylate cyclase domain.

Belongs to the adenylyl cyclase class-4/guanylyl cyclase family. In terms of tissue distribution, expressed bilaterally in ASE neurons.

It is found in the cell membrane. The catalysed reaction is GTP = 3',5'-cyclic GMP + diphosphate. Functionally, guanylate cyclase involved in the production of the second messenger cGMP. Regulates chemotaxis responses toward salt ions in ASE sensory neurons. The protein is Receptor-type guanylate cyclase gcy-4 of Caenorhabditis briggsae.